The sequence spans 480 residues: MSTSPKPVAPIHVIGGGLAGSEAAWQIAQAGVPVVLHEMRRDLPSSSGAVGPTKVRTDAHQTDGLAEMVCSNSFRSDDWQFNAVGLLHAEMRKLDSLILSAADQHQVPAGGALAVDRDGFSAEVTRRIEAHPLITIEREEVAGLPPEDWDSVVVATGPLTSPALADAILELSGEGQLSFFDAIAPIIHVESIDMDIAWRQSRYDKEGPGGDAAAYINCPMNKAQYEAFIDALLEGPKAEFKDWEHVPYFDGCLPIEVMAERGRETLRHGPMKPVGLTNPRDPTVKAYAIVQLRQDNALGTLWNMVGFQTKLKHGAQAEVFRMIPGLQNAQFARLGGLHRNTFINSPRLLDRSLRMKVAPRLRFAGQMTGVEGYVESAATGLLAGRFAAAERLGKTLDAPPPTTALGALVDHVTGGHIEGEALGKTSFQPMNINYGLLPPTETPKVGDDGVKIPMKERGRAKKRLMSLRALADLDQWMAGA.

15–20 (GGGLAG) contacts FAD.

This sequence belongs to the MnmG family. TrmFO subfamily. FAD serves as cofactor.

The protein resides in the cytoplasm. The catalysed reaction is uridine(54) in tRNA + (6R)-5,10-methylene-5,6,7,8-tetrahydrofolate + NADH + H(+) = 5-methyluridine(54) in tRNA + (6S)-5,6,7,8-tetrahydrofolate + NAD(+). It catalyses the reaction uridine(54) in tRNA + (6R)-5,10-methylene-5,6,7,8-tetrahydrofolate + NADPH + H(+) = 5-methyluridine(54) in tRNA + (6S)-5,6,7,8-tetrahydrofolate + NADP(+). In terms of biological role, catalyzes the folate-dependent formation of 5-methyl-uridine at position 54 (M-5-U54) in all tRNAs. In Caulobacter sp. (strain K31), this protein is Methylenetetrahydrofolate--tRNA-(uracil-5-)-methyltransferase TrmFO.